The chain runs to 150 residues: 3-hydroxyacyl-[acyl-carrier-protein] dehydratase FabZ (150 aa).

Residue H54 is part of the active site.

It belongs to the thioester dehydratase family. FabZ subfamily.

The protein resides in the cytoplasm. The catalysed reaction is a (3R)-hydroxyacyl-[ACP] = a (2E)-enoyl-[ACP] + H2O. Involved in unsaturated fatty acids biosynthesis. Catalyzes the dehydration of short chain beta-hydroxyacyl-ACPs and long chain saturated and unsaturated beta-hydroxyacyl-ACPs. In Chromobacterium violaceum (strain ATCC 12472 / DSM 30191 / JCM 1249 / CCUG 213 / NBRC 12614 / NCIMB 9131 / NCTC 9757 / MK), this protein is 3-hydroxyacyl-[acyl-carrier-protein] dehydratase FabZ.